Reading from the N-terminus, the 517-residue chain is General transcription factor IIF subunit 1 (517 aa).

Ala2 is modified (N-acetylalanine). Thr156 carries the post-translational modification Phosphothreonine. The disordered stretch occupies residues 178-458 (QQRRLKDQDQ…SGDVQVTEDA (281 aa)). Acidic residues predominate over residues 210-225 (LEDDLEMSSDDSEASG). Phosphoserine is present on residues Ser217, Ser218, Ser221, and Ser224. Over residues 232–251 (PKAKKKAPPSKGGRKKKKKK) the composition is skewed to basic residues. 2 stretches are compositionally biased toward acidic residues: residues 255–270 (DEAF…EGQE) and 303–325 (EQSE…EEEE). The residue at position 331 (Thr331) is a Phosphothreonine. Residues 343-355 (EESDSSEESDIDS) show a composition bias toward acidic residues. Residues 364-374 (AKKKTPPKRER) are compositionally biased toward basic residues. 4 positions are modified to phosphoserine: Ser377, Ser380, Ser381, and Ser385. Low complexity predominate over residues 377–391 (SGGSSRGNSRPGTPS). Thr389 is subject to Phosphothreonine. Ser391 is modified (phosphoserine). The span at 392–401 (TEAGSTSSTL) shows a compositional bias: polar residues. Position 407 is an N6-acetyllysine (Lys407). The span at 428-452 (GPQSLSGKSTPQPQSGKSTPSSGDV) shows a compositional bias: polar residues. A phosphoserine mark is found at Ser431, Ser433, and Ser436. Thr437 and Thr446 each carry phosphothreonine. Ser449 carries the phosphoserine modification.

It belongs to the TFIIF alpha subunit family. Heterodimer of an alpha and a beta subunit. Interacts with GTF2F2, CTDP1, TAF6/TAFII80 and URI1. Interacts with GTF2B (via C-terminus and preferentially via acetylated form); this interaction prevents binding of GTF2B to GTF2F2. Part of TBP-based Pol II pre-initiation complex (PIC), in which Pol II core assembles with general transcription factors and other specific initiation factors including GTF2E1, GTF2E2, GTF2F1, GTF2F2, TCEA1, ERCC2, ERCC3, GTF2H2, GTF2H3, GTF2H4, GTF2H5, GTF2A1, GTF2A2, GTF2B and TBP; this large multi-subunit PIC complex mediates DNA unwinding and targets Pol II core to the transcription start site where the first phosphodiester bond forms. In terms of processing, phosphorylated on Ser and other residues by TAF1 and casein kinase II-like kinases.

The protein resides in the nucleus. Its function is as follows. TFIIF is a general transcription initiation factor that binds to RNA polymerase II and helps to recruit it to the initiation complex in collaboration with TFIIB. It promotes transcription elongation. This is General transcription factor IIF subunit 1 (GTF2F1) from Bos taurus (Bovine).